The sequence spans 283 residues: ESX-1 secretion-associated protein EspG1 (283 aa).

It belongs to the EspG family. As to quaternary structure, interacts specifically with ESX-1-dependent PE/PPE proteins. Interacts with PPE68.

The protein resides in the cytoplasm. Functionally, specific chaperone for cognate PE/PPE proteins. Plays an important role in preventing aggregation of PE/PPE dimers. In Mycobacterium tuberculosis (strain ATCC 25618 / H37Rv), this protein is ESX-1 secretion-associated protein EspG1.